The following is a 498-amino-acid chain: Isocitrate dehydrogenase [NADP], mitochondrial (498 aa).

NADP(+) is bound by residues 164-166 (TIT) and Arg171. Thr166 is a binding site for substrate. Substrate-binding positions include 183–189 (SPNGTIR), Arg198, and Arg221. Asp339 provides a ligand contact to Mn(2+). Residue Lys347 coordinates NADP(+). Asp362 contacts Mn(2+). NADP(+)-binding positions include 397-402 (GTVTRH) and Asn415.

Belongs to the isocitrate and isopropylmalate dehydrogenases family. Mg(2+) serves as cofactor. The cofactor is Mn(2+).

It localises to the mitochondrion. The enzyme catalyses D-threo-isocitrate + NADP(+) = 2-oxoglutarate + CO2 + NADPH. This chain is Isocitrate dehydrogenase [NADP], mitochondrial (icdA), found in Aspergillus niger.